The primary structure comprises 243 residues: Small ribosomal subunit protein uS3 (243 aa).

Residues 38–106 (IRKYLNARLA…DIQINIFEVK (69 aa)) enclose the KH type-2 domain. The interval 217 to 243 (TQTKESGRGGNGNNNGGKNFKRKKNNR) is disordered.

Belongs to the universal ribosomal protein uS3 family. Part of the 30S ribosomal subunit. Forms a tight complex with proteins S10 and S14.

Functionally, binds the lower part of the 30S subunit head. Binds mRNA in the 70S ribosome, positioning it for translation. The protein is Small ribosomal subunit protein uS3 of Phocaeicola vulgatus (strain ATCC 8482 / DSM 1447 / JCM 5826 / CCUG 4940 / NBRC 14291 / NCTC 11154) (Bacteroides vulgatus).